We begin with the raw amino-acid sequence, 621 residues long: MRPAQTNQFDYVKIGLASPERIRQWGERTLPNGQVVGEVTKPETINYRTLKPEMDGLFCERIFGPKDWECHCGKYKESVIEVLSVSAVVLEVTESRVRRHRMGYIKLAAPVAHVGYSKAFLAIFHSVGYALRDVEQIVYFNSYVVLSPGNAETLTYKQLLSEDQWLEIEDQIYSEDSLLQGVEVGIGAEALLRLLADINLEQEAESLREEIGNAKGQKRAKLIKRLRVIDNFIATGSKPEWMVMAVIPVIPPDLRPMVQLDGGRFATSDLNDLYRRVINRNNRLARLQEILAPEIIVRNEKRMLQEAVDALIDNGRRGRTVVGANNRPLKSLSDIIEGKQGRFRQNLLGKRVDYSGRSVIVVGPKLKIHQCGLPREMAIELFQPFVINRLIRSGMVIHQAAPMISRNDPSVWDVLEEVIEGHPVMLNRAPTLHRLGIQSFEPILVEGRAIQLHPLVCPAFNADFDGDQMAVHVPLSLESQAEARLLMLASNNILSPATGKPIITPSQDMVLGAYYLTAENPGATKGAGKYFSSLEDVIMAFQQEQIDLHAYIYVRFDGEIESDQPDTEPVKVTENEDGTRTLLYKFRRVRQDAKGNVLSQYIYTTPGRVIYNNAIQEALAS.

Mg(2+) contacts are provided by aspartate 463, aspartate 465, and aspartate 467.

It belongs to the RNA polymerase beta' chain family. RpoC1 subfamily. As to quaternary structure, in cyanobacteria the RNAP catalytic core is composed of 2 alpha, 1 beta, 1 beta', 1 gamma and 1 omega subunit. When a sigma factor is associated with the core the holoenzyme is formed, which can initiate transcription. The cofactor is Mg(2+).

It carries out the reaction RNA(n) + a ribonucleoside 5'-triphosphate = RNA(n+1) + diphosphate. Functionally, DNA-dependent RNA polymerase catalyzes the transcription of DNA into RNA using the four ribonucleoside triphosphates as substrates. This Nostoc commune protein is DNA-directed RNA polymerase subunit gamma.